Consider the following 312-residue polypeptide: 2-phospho-L-lactate transferase (312 aa).

2 residues coordinate 7,8-didemethyl-8-hydroxy-5-deazariboflavin: aspartate 50 and lysine 89.

The protein belongs to the CofD family. As to quaternary structure, homodimer. Requires Mg(2+) as cofactor.

It carries out the reaction (2S)-lactyl-2-diphospho-5'-guanosine + 7,8-didemethyl-8-hydroxy-5-deazariboflavin = oxidized coenzyme F420-0 + GMP + H(+). It participates in cofactor biosynthesis; coenzyme F420 biosynthesis. Catalyzes the transfer of the 2-phospholactate moiety from (2S)-lactyl-2-diphospho-5'-guanosine to 7,8-didemethyl-8-hydroxy-5-deazariboflavin (FO) with the formation of oxidized coenzyme F420-0 and GMP. The chain is 2-phospho-L-lactate transferase from Methanococcus vannielii (strain ATCC 35089 / DSM 1224 / JCM 13029 / OCM 148 / SB).